The following is a 72-amino-acid chain: Cell division protein ZapB (72 aa).

Positions 1 to 71 (MSLEILDQLE…LRSLLGRIDN (71 aa)) form a coiled coil. The disordered stretch occupies residues 36 to 56 (LSRQTNEQLRSENEHLKTEHH). A compositionally biased stretch (basic and acidic residues) spans 44 to 56 (LRSENEHLKTEHH).

It belongs to the ZapB family. As to quaternary structure, homodimer. The ends of the coiled-coil dimer bind to each other, forming polymers. Interacts with FtsZ.

It is found in the cytoplasm. Non-essential, abundant cell division factor that is required for proper Z-ring formation. It is recruited early to the divisome by direct interaction with FtsZ, stimulating Z-ring assembly and thereby promoting cell division earlier in the cell cycle. Its recruitment to the Z-ring requires functional FtsA or ZipA. In Histophilus somni (strain 129Pt) (Haemophilus somnus), this protein is Cell division protein ZapB.